The following is a 360-amino-acid chain: Phospho-N-acetylmuramoyl-pentapeptide-transferase (360 aa).

The next 11 membrane-spanning stretches (helical) occupy residues 2-22 (LVWVADFLAQYFSIFSVFQYL), 26-46 (AILGVLTALLISLLVGPVMIR), 73-93 (TMGGALILVAIAVSTLLWADL), 97-117 (YVLITLGVTLLFGAIGWVDDW), 134-154 (YFWQSVFGFGAAVLLFKTAHL), 168-188 (ITLALGVGFVLLTYFVIVGGS), 199-219 (GLAIMPTVMVGGALAVFAYLS), 236-256 (TGELVIFLGALVGAGLGFLWF), 263-283 (VFMGDVGALALGAALGVVAVI), 288-308 (LVFFVMGGVFVMETVSVILQV), and 339-359 (IVRFWVITVVLVLVGLATLKI).

Belongs to the glycosyltransferase 4 family. MraY subfamily. Mg(2+) is required as a cofactor.

The protein localises to the cell inner membrane. It carries out the reaction UDP-N-acetyl-alpha-D-muramoyl-L-alanyl-gamma-D-glutamyl-meso-2,6-diaminopimeloyl-D-alanyl-D-alanine + di-trans,octa-cis-undecaprenyl phosphate = di-trans,octa-cis-undecaprenyl diphospho-N-acetyl-alpha-D-muramoyl-L-alanyl-D-glutamyl-meso-2,6-diaminopimeloyl-D-alanyl-D-alanine + UMP. The protein operates within cell wall biogenesis; peptidoglycan biosynthesis. Catalyzes the initial step of the lipid cycle reactions in the biosynthesis of the cell wall peptidoglycan: transfers peptidoglycan precursor phospho-MurNAc-pentapeptide from UDP-MurNAc-pentapeptide onto the lipid carrier undecaprenyl phosphate, yielding undecaprenyl-pyrophosphoryl-MurNAc-pentapeptide, known as lipid I. This is Phospho-N-acetylmuramoyl-pentapeptide-transferase from Hahella chejuensis (strain KCTC 2396).